A 291-amino-acid chain; its full sequence is ATP synthase gamma chain (291 aa).

It belongs to the ATPase gamma chain family. F-type ATPases have 2 components, CF(1) - the catalytic core - and CF(0) - the membrane proton channel. CF(1) has five subunits: alpha(3), beta(3), gamma(1), delta(1), epsilon(1). CF(0) has three main subunits: a, b and c.

Its subcellular location is the cell inner membrane. Its function is as follows. Produces ATP from ADP in the presence of a proton gradient across the membrane. The gamma chain is believed to be important in regulating ATPase activity and the flow of protons through the CF(0) complex. The protein is ATP synthase gamma chain of Burkholderia ambifaria (strain MC40-6).